Here is an 834-residue protein sequence, read N- to C-terminus: MAVEEEGLRVFQSVRIKIGEAKNLPSYPGPNKMRDCYCTVNLDQEEVFRTKIVEKSLCPFYGEDFYCEIPRSFRHLSFYIFDRDVFRRDSIIGKVAIQKEDLQRYHNRDTWFQLQHVDADSEVQGKVHLELRLSEVITDTGVVCHKLAARIFECQGLPIVNGQCDPYATVTLAGPFRSEAKKTKVKKKTNNPQFDEVFYFEVTRPCSYSKKSHFDFEEEDVDKLEIRVDLWNASNLKFGDEFLGELRIPLHVLRYASSYEAWYFLQPRDNGSKSVKPDDLGSLRLNVVYTEDHVFSSEYYSPLRDLLLKSADVEPVSASAAHILGEVCRDKQEAAIPLVRLLLHYGRVVPFISAIASAEVKRTQDPNTIFRGNSLTSKCIDETMKLAGMHYLHVTLKPTIEEICQSHKSCEIDPVKLKDGENLENNMESLRQYVDRIFSVITKSGVSCPTVMCDIFFSLREAAAKRFQDDLDVRYTAVSSFIFLRFFAPAILSPNLFQLTPHHTDPQTSRTLTLISKTIQTLGSLSKSKSASFKESYMATFYEFFNEQKYADAVKNFLDLISSSGRRDPKSIEQPILLKEGFMIKRAQGRKRFGMKNFKKRWFRLTNHEFTYQKSKGDQPLCNIPIENILAVERLEEESFRMKNMFQVIQPERALYIQANNCVEAKDWIDILTKVSQCNQKRLTVFHPSAYLNGHWLCCRASSDTAIGCTPCTGGLPANIQLDIDGDRETERIYSLFNLYMGKLEKMQEACGSKSVYDGPEQEEYSTFIIDDPQETYRTLKQVIAGVGTLEQEHAQYRRNKFKKTRYGSQEHPIGDKSFQNYIRQQSEISTHSI.

2 consecutive C2 domains span residues 1-112 and 123-263; these read MAVE…DTWF and VQGK…EAWY. Alanine 2 is subject to N-acetylalanine. Tyrosine 66 is modified (phosphotyrosine). Serine 77 bears the Phosphoserine mark. Threonine 110 bears the Phosphothreonine mark. In terms of domain architecture, Ras-GAP spans 346 to 561; sequence GRVVPFISAI…DAVKNFLDLI (216 aa). The PH domain maps to 576–677; the sequence is ILLKEGFMIK…WIDILTKVSQ (102 aa). Residues 679–715 form a Btk-type zinc finger; the sequence is NQKRLTVFHPSAYLNGHWLCCRASSDTAIGCTPCTGG. Histidine 687, cysteine 698, cysteine 699, and cysteine 709 together coordinate Zn(2+). Residues serine 809 and serine 833 each carry the phosphoserine modification.

In terms of biological role, inhibitory regulator of the Ras-cyclic AMP pathway. Binds inositol tetrakisphosphate (IP4). In Rattus norvegicus (Rat), this protein is Ras GTPase-activating protein 3 (Rasa3).